Here is a 368-residue protein sequence, read N- to C-terminus: UDP-N-acetylglucosamine--N-acetylmuramyl-(pentapeptide) pyrophosphoryl-undecaprenol N-acetylglucosamine transferase (368 aa).

Residues 10 to 12 (TGG), asparagine 126, serine 200, isoleucine 255, and glutamine 300 contribute to the UDP-N-acetyl-alpha-D-glucosamine site.

Belongs to the glycosyltransferase 28 family. MurG subfamily.

The protein resides in the cell membrane. The enzyme catalyses Mur2Ac(oyl-L-Ala-gamma-D-Glu-L-Lys-D-Ala-D-Ala)-di-trans,octa-cis-undecaprenyl diphosphate + UDP-N-acetyl-alpha-D-glucosamine = beta-D-GlcNAc-(1-&gt;4)-Mur2Ac(oyl-L-Ala-gamma-D-Glu-L-Lys-D-Ala-D-Ala)-di-trans,octa-cis-undecaprenyl diphosphate + UDP + H(+). The protein operates within cell wall biogenesis; peptidoglycan biosynthesis. Cell wall formation. Catalyzes the transfer of a GlcNAc subunit on undecaprenyl-pyrophosphoryl-MurNAc-pentapeptide (lipid intermediate I) to form undecaprenyl-pyrophosphoryl-MurNAc-(pentapeptide)GlcNAc (lipid intermediate II). The chain is UDP-N-acetylglucosamine--N-acetylmuramyl-(pentapeptide) pyrophosphoryl-undecaprenol N-acetylglucosamine transferase from Lactobacillus acidophilus (strain ATCC 700396 / NCK56 / N2 / NCFM).